Reading from the N-terminus, the 150-residue chain is Cytochrome c oxidase subunit 5A, mitochondrial (150 aa).

A mitochondrion-targeting transit peptide spans 1-41 (MLGAALRRCAVAATTWAGPRGLLHSSRTPGPAAAIQSVRCY). The SIFI-degron motif lies at 2–17 (LGAALRRCAVAATTWA). N6-acetyllysine is present on residues Lys87 and Lys113. Phosphothreonine is present on Thr141.

Belongs to the cytochrome c oxidase subunit 5A family. In terms of assembly, component of the cytochrome c oxidase (complex IV, CIV), a multisubunit enzyme composed of 14 subunits. The complex is composed of a catalytic core of 3 subunits MT-CO1, MT-CO2 and MT-CO3, encoded in the mitochondrial DNA, and 11 supernumerary subunits COX4I, COX5A, COX5B, COX6A, COX6B, COX6C, COX7A, COX7B, COX7C, COX8 and NDUFA4, which are encoded in the nuclear genome. The complex exists as a monomer or a dimer and forms supercomplexes (SCs) in the inner mitochondrial membrane with NADH-ubiquinone oxidoreductase (complex I, CI) and ubiquinol-cytochrome c oxidoreductase (cytochrome b-c1 complex, complex III, CIII), resulting in different assemblies (supercomplex SCI(1)III(2)IV(1) and megacomplex MCI(2)III(2)IV(2)). Interacts with AFG1L. Interacts with RAB5IF. In response to mitochondrial stress, the precursor protein is ubiquitinated by the SIFI complex in the cytoplasm before mitochondrial import, leading to its degradation. Within the SIFI complex, UBR4 initiates ubiquitin chain that are further elongated or branched by KCMF1.

The protein localises to the mitochondrion inner membrane. It participates in energy metabolism; oxidative phosphorylation. In terms of biological role, component of the cytochrome c oxidase, the last enzyme in the mitochondrial electron transport chain which drives oxidative phosphorylation. The respiratory chain contains 3 multisubunit complexes succinate dehydrogenase (complex II, CII), ubiquinol-cytochrome c oxidoreductase (cytochrome b-c1 complex, complex III, CIII) and cytochrome c oxidase (complex IV, CIV), that cooperate to transfer electrons derived from NADH and succinate to molecular oxygen, creating an electrochemical gradient over the inner membrane that drives transmembrane transport and the ATP synthase. Cytochrome c oxidase is the component of the respiratory chain that catalyzes the reduction of oxygen to water. Electrons originating from reduced cytochrome c in the intermembrane space (IMS) are transferred via the dinuclear copper A center (CU(A)) of subunit 2 and heme A of subunit 1 to the active site in subunit 1, a binuclear center (BNC) formed by heme A3 and copper B (CU(B)). The BNC reduces molecular oxygen to 2 water molecules using 4 electrons from cytochrome c in the IMS and 4 protons from the mitochondrial matrix. The chain is Cytochrome c oxidase subunit 5A, mitochondrial (COX5A) from Colobus guereza (Mantled guereza).